Reading from the N-terminus, the 552-residue chain is Glutamate--tRNA ligase (552 aa).

Positions 102 to 112 (PNPSGPLHIGH) match the 'HIGH' region motif.

It belongs to the class-I aminoacyl-tRNA synthetase family. Glutamate--tRNA ligase type 2 subfamily.

It localises to the cytoplasm. The enzyme catalyses tRNA(Glu) + L-glutamate + ATP = L-glutamyl-tRNA(Glu) + AMP + diphosphate. In terms of biological role, catalyzes the attachment of glutamate to tRNA(Glu) in a two-step reaction: glutamate is first activated by ATP to form Glu-AMP and then transferred to the acceptor end of tRNA(Glu). This chain is Glutamate--tRNA ligase, found in Methanothermobacter marburgensis (strain ATCC BAA-927 / DSM 2133 / JCM 14651 / NBRC 100331 / OCM 82 / Marburg) (Methanobacterium thermoautotrophicum).